Consider the following 352-residue polypeptide: Photosystem II protein D1 (352 aa).

An N-acetylthreonine modification is found at Thr2. Thr2 carries the phosphothreonine modification. Transmembrane regions (helical) follow at residues 29–46 (YIGW…TATS), 118–133 (HFLL…EWEL), and 142–156 (WIAV…AATA). His118 provides a ligand contact to chlorophyll a. Residue Tyr126 coordinates pheophytin a. Residues Asp170 and Glu189 each contribute to the [CaMn4O5] cluster site. Residues 197-218 (FHMLGVAGVFGGSLFSAMHGSL) form a helical membrane-spanning segment. Chlorophyll a is bound at residue His198. A quinone contacts are provided by residues His215 and 264–265 (SF). His215 contacts Fe cation. Position 272 (His272) interacts with Fe cation. A helical transmembrane segment spans residues 274-288 (FLAAWPVVGIWFTAL). 4 residues coordinate [CaMn4O5] cluster: His332, Glu333, Asp342, and Ala344. Residues 345-352 (SVEAPVVG) constitute a propeptide that is removed on maturation.

This sequence belongs to the reaction center PufL/M/PsbA/D family. PSII is composed of 1 copy each of membrane proteins PsbA, PsbB, PsbC, PsbD, PsbE, PsbF, PsbH, PsbI, PsbJ, PsbK, PsbL, PsbM, PsbT, PsbX, PsbY, PsbZ, Psb30/Ycf12, at least 3 peripheral proteins of the oxygen-evolving complex and a large number of cofactors. It forms dimeric complexes. Requires The D1/D2 heterodimer binds P680, chlorophylls that are the primary electron donor of PSII, and subsequent electron acceptors. It shares a non-heme iron and each subunit binds pheophytin, quinone, additional chlorophylls, carotenoids and lipids. D1 provides most of the ligands for the Mn4-Ca-O5 cluster of the oxygen-evolving complex (OEC). There is also a Cl(-1) ion associated with D1 and D2, which is required for oxygen evolution. The PSII complex binds additional chlorophylls, carotenoids and specific lipids. as cofactor. Post-translationally, tyr-161 forms a radical intermediate that is referred to as redox-active TyrZ, YZ or Y-Z. In terms of processing, C-terminally processed by CTPA; processing is essential to allow assembly of the oxygen-evolving complex and thus photosynthetic growth.

It localises to the plastid. Its subcellular location is the chloroplast thylakoid membrane. The enzyme catalyses 2 a plastoquinone + 4 hnu + 2 H2O = 2 a plastoquinol + O2. In terms of biological role, photosystem II (PSII) is a light-driven water:plastoquinone oxidoreductase that uses light energy to abstract electrons from H(2)O, generating O(2) and a proton gradient subsequently used for ATP formation. It consists of a core antenna complex that captures photons, and an electron transfer chain that converts photonic excitation into a charge separation. The D1/D2 (PsbA/PsbD) reaction center heterodimer binds P680, the primary electron donor of PSII as well as several subsequent electron acceptors. The protein is Photosystem II protein D1 of Zygnema circumcarinatum (Green alga).